A 406-amino-acid polypeptide reads, in one-letter code: uncharacterized protein (406 aa).

Residues 136 to 153 (SQKNWGSEKNWNSPSQGP) show a composition bias toward polar residues. A disordered region spans residues 136–157 (SQKNWGSEKNWNSPSQGPASRE).

This is an uncharacterized protein from Rattus norvegicus (Rat).